We begin with the raw amino-acid sequence, 266 residues long: Glutamate racemase (266 aa).

Substrate-binding positions include Asp-9–Ser-10 and Tyr-41–Gly-42. Cys-72 serves as the catalytic Proton donor/acceptor. Residue Asn-73–Thr-74 coordinates substrate. The active-site Proton donor/acceptor is the Cys-184. Residue Thr-185 to His-186 coordinates substrate.

The protein belongs to the aspartate/glutamate racemases family.

It carries out the reaction L-glutamate = D-glutamate. It functions in the pathway cell wall biogenesis; peptidoglycan biosynthesis. Functionally, provides the (R)-glutamate required for cell wall biosynthesis. This is Glutamate racemase from Staphylococcus aureus (strain Mu3 / ATCC 700698).